The following is a 208-amino-acid chain: Proheparin-binding EGF-like growth factor (208 aa).

Positions 1–19 (MKLLPSVVLKLFLAAVLSA) are cleaved as a signal peptide. A propeptide spans 20–62 (LVTGESLERLRRGLAAGTSNPDPPTVSTDQLLPLGGGRDRKVR) (or 72, or 73, or 76, or 81). At 20-160 (LVTGESLERL…ENRLYTYDHT (141 aa)) the chain is on the extracellular side. The disordered stretch occupies residues 33 to 56 (LAAGTSNPDPPTVSTDQLLPLGGG). The span at 36–49 (GTSNPDPPTVSTDQ) shows a compositional bias: polar residues. An O-linked (GalNAc...) threonine glycan is attached at Thr-37. O-linked (GalNAc...) serine glycosylation is present at Ser-38. O-linked (GalNAc...) threonine glycosylation is found at Thr-44, Thr-47, Thr-75, and Thr-85. The interval 82 to 104 (ALATPNKEEHGKRKKKGKGLGKK) is disordered. The span at 93 to 102 (KRKKKGKGLG) shows a compositional bias: basic residues. One can recognise an EGF-like domain in the interval 104–144 (KRDPCLRKYKDFCIHGECKYVKELRAPSCICHPGYHGERCH). 3 cysteine pairs are disulfide-bonded: Cys-108/Cys-121, Cys-116/Cys-132, and Cys-134/Cys-143. Residues 149–208 (PVENRLYTYDHTTILAVVAVVLSSVCLLVIVGLLMFRYHRRGGYDVENEEKVKLGMTNSH) constitute a propeptide, C-terminal. Residues 161–184 (TILAVVAVVLSSVCLLVIVGLLMF) traverse the membrane as a helical segment. Over 185–208 (RYHRRGGYDVENEEKVKLGMTNSH) the chain is Cytoplasmic.

As to quaternary structure, interacts with FBLN1. Interacts with EGFR and ERBB4. Post-translationally, several N-termini have been identified by direct sequencing. The forms with N-termini 63, 73 and 74 have been tested and found to be biologically active. In terms of processing, O-glycosylated with core 1 or possibly core 8 glycans. Thr-47 is a minor glycosylation site compared to Thr-44.

It localises to the secreted. The protein localises to the extracellular space. The protein resides in the cell membrane. Its function is as follows. Growth factor that mediates its effects via EGFR, ERBB2 and ERBB4. Required for normal cardiac valve formation and normal heart function. Promotes smooth muscle cell proliferation. May be involved in macrophage-mediated cellular proliferation. It is mitogenic for fibroblasts, but not endothelial cells. It is able to bind EGF receptor/EGFR with higher affinity than EGF itself and is a far more potent mitogen for smooth muscle cells than EGF. Also acts as a diphtheria toxin receptor. The protein is Proheparin-binding EGF-like growth factor (HBEGF) of Homo sapiens (Human).